Consider the following 105-residue polypeptide: Large ribosomal subunit protein uL24 (105 aa).

This sequence belongs to the universal ribosomal protein uL24 family. As to quaternary structure, part of the 50S ribosomal subunit.

Its function is as follows. One of two assembly initiator proteins, it binds directly to the 5'-end of the 23S rRNA, where it nucleates assembly of the 50S subunit. One of the proteins that surrounds the polypeptide exit tunnel on the outside of the subunit. This is Large ribosomal subunit protein uL24 from Xanthomonas oryzae pv. oryzae (strain PXO99A).